The primary structure comprises 443 residues: Ribosomal protein uS12 methylthiotransferase RimO (443 aa).

Positions 8-118 (PKVGFVSLGC…VVNAVHEVVP (111 aa)) constitute an MTTase N-terminal domain. C17, C53, C82, C151, C155, and C158 together coordinate [4Fe-4S] cluster. Positions 137-376 (LTPRHYAYLK…AHQQAISSAR (240 aa)) constitute a Radical SAM core domain. Positions 378 to 443 (QLRIGKEIEV…DEYDMWAEPV (66 aa)) constitute a TRAM domain.

Belongs to the methylthiotransferase family. RimO subfamily. [4Fe-4S] cluster serves as cofactor.

Its subcellular location is the cytoplasm. The catalysed reaction is L-aspartate(89)-[ribosomal protein uS12]-hydrogen + (sulfur carrier)-SH + AH2 + 2 S-adenosyl-L-methionine = 3-methylsulfanyl-L-aspartate(89)-[ribosomal protein uS12]-hydrogen + (sulfur carrier)-H + 5'-deoxyadenosine + L-methionine + A + S-adenosyl-L-homocysteine + 2 H(+). Functionally, catalyzes the methylthiolation of an aspartic acid residue of ribosomal protein uS12. This chain is Ribosomal protein uS12 methylthiotransferase RimO, found in Pseudomonas putida (strain W619).